The following is a 142-amino-acid chain: Large ribosomal subunit protein uL13 (142 aa).

The protein belongs to the universal ribosomal protein uL13 family. Part of the 50S ribosomal subunit.

Functionally, this protein is one of the early assembly proteins of the 50S ribosomal subunit, although it is not seen to bind rRNA by itself. It is important during the early stages of 50S assembly. The chain is Large ribosomal subunit protein uL13 from Azoarcus sp. (strain BH72).